The sequence spans 425 residues: Serine--tRNA ligase (425 aa).

The interval 41–70 (TERSQLQARSNQVGKQVGEKIKSGSDPKGT) is disordered. Over residues 44-54 (SQLQARSNQVG) the composition is skewed to polar residues. Over residues 57-70 (VGEKIKSGSDPKGT) the composition is skewed to basic and acidic residues. 234-236 (TSE) serves as a coordination point for L-serine. 265–267 (RRE) provides a ligand contact to ATP. Residue Glu-288 coordinates L-serine. 352–355 (EISS) is a binding site for ATP. Position 388 (Ser-388) interacts with L-serine.

This sequence belongs to the class-II aminoacyl-tRNA synthetase family. Type-1 seryl-tRNA synthetase subfamily. As to quaternary structure, homodimer. The tRNA molecule binds across the dimer.

The protein resides in the cytoplasm. It carries out the reaction tRNA(Ser) + L-serine + ATP = L-seryl-tRNA(Ser) + AMP + diphosphate + H(+). The catalysed reaction is tRNA(Sec) + L-serine + ATP = L-seryl-tRNA(Sec) + AMP + diphosphate + H(+). Its pathway is aminoacyl-tRNA biosynthesis; selenocysteinyl-tRNA(Sec) biosynthesis; L-seryl-tRNA(Sec) from L-serine and tRNA(Sec): step 1/1. Functionally, catalyzes the attachment of serine to tRNA(Ser). Is also able to aminoacylate tRNA(Sec) with serine, to form the misacylated tRNA L-seryl-tRNA(Sec), which will be further converted into selenocysteinyl-tRNA(Sec). The protein is Serine--tRNA ligase of Trichodesmium erythraeum (strain IMS101).